We begin with the raw amino-acid sequence, 557 residues long: CTP synthase (557 aa).

The amidoligase domain stretch occupies residues 1–267 (MAKFVFVTGG…CREVLDVLDL (267 aa)). CTP is bound at residue Ser13. Ser13 serves as a coordination point for UTP. ATP contacts are provided by residues 14–19 (SIGKGI) and Asp71. Residues Asp71 and Glu141 each coordinate Mg(2+). Residues 148–150 (DIE), 188–193 (KTKPTQ), and Lys224 each bind CTP. UTP is bound by residues 188–193 (KTKPTQ) and Lys224. Residues 292-534 (KVALVGKYVQ…IEAAQQRLPC (243 aa)) enclose the Glutamine amidotransferase type-1 domain. Gly354 serves as a coordination point for L-glutamine. Catalysis depends on Cys381, which acts as the Nucleophile; for glutamine hydrolysis. Residues 382 to 385 (LGMQ), Glu405, and Arg462 contribute to the L-glutamine site. Active-site residues include His507 and Glu509. The disordered stretch occupies residues 532-557 (LPCSPSEAMRQQNNSAAGSSHPSLQP). A compositionally biased stretch (polar residues) spans 540 to 557 (MRQQNNSAAGSSHPSLQP).

It belongs to the CTP synthase family. In terms of assembly, homotetramer.

The enzyme catalyses UTP + L-glutamine + ATP + H2O = CTP + L-glutamate + ADP + phosphate + 2 H(+). It catalyses the reaction L-glutamine + H2O = L-glutamate + NH4(+). The catalysed reaction is UTP + NH4(+) + ATP = CTP + ADP + phosphate + 2 H(+). The protein operates within pyrimidine metabolism; CTP biosynthesis via de novo pathway; CTP from UDP: step 2/2. Allosterically activated by GTP, when glutamine is the substrate; GTP has no effect on the reaction when ammonia is the substrate. The allosteric effector GTP functions by stabilizing the protein conformation that binds the tetrahedral intermediate(s) formed during glutamine hydrolysis. Inhibited by the product CTP, via allosteric rather than competitive inhibition. In terms of biological role, catalyzes the ATP-dependent amination of UTP to CTP with either L-glutamine or ammonia as the source of nitrogen. Regulates intracellular CTP levels through interactions with the four ribonucleotide triphosphates. The sequence is that of CTP synthase from Synechococcus sp. (strain CC9311).